Here is a 508-residue protein sequence, read N- to C-terminus: 3-octaprenyl-4-hydroxybenzoate carboxy-lyase (508 aa).

Asparagine 178 lines the Mn(2+) pocket. Prenylated FMN is bound by residues 181–183 (IYR), 195–197 (RWL), and 200–201 (RG). Glutamate 244 contributes to the Mn(2+) binding site. The Proton donor role is filled by aspartate 303.

Belongs to the UbiD family. As to quaternary structure, homohexamer. Requires prenylated FMN as cofactor. It depends on Mn(2+) as a cofactor.

It localises to the cell membrane. It catalyses the reaction a 4-hydroxy-3-(all-trans-polyprenyl)benzoate + H(+) = a 2-(all-trans-polyprenyl)phenol + CO2. It participates in cofactor biosynthesis; ubiquinone biosynthesis. In terms of biological role, catalyzes the decarboxylation of 3-octaprenyl-4-hydroxy benzoate to 2-octaprenylphenol, an intermediate step in ubiquinone biosynthesis. This Cupriavidus taiwanensis (strain DSM 17343 / BCRC 17206 / CCUG 44338 / CIP 107171 / LMG 19424 / R1) (Ralstonia taiwanensis (strain LMG 19424)) protein is 3-octaprenyl-4-hydroxybenzoate carboxy-lyase.